The primary structure comprises 236 residues: uncharacterized protein (236 aa).

The protein localises to the plastid. It localises to the chloroplast. This is an uncharacterized protein from Chlorella vulgaris (Green alga).